Reading from the N-terminus, the 417-residue chain is Tol-Pal system protein TolB (417 aa).

The signal sequence occupies residues 1–16 (MRYLWLFLIHTIGLFA).

The protein belongs to the TolB family. The Tol-Pal system is composed of five core proteins: the inner membrane proteins TolA, TolQ and TolR, the periplasmic protein TolB and the outer membrane protein Pal. They form a network linking the inner and outer membranes and the peptidoglycan layer.

The protein resides in the periplasm. In terms of biological role, part of the Tol-Pal system, which plays a role in outer membrane invagination during cell division and is important for maintaining outer membrane integrity. This is Tol-Pal system protein TolB from Helicobacter pylori (strain ATCC 700392 / 26695) (Campylobacter pylori).